A 356-amino-acid chain; its full sequence is D-xylulose reductase (356 aa).

Zn(2+) is bound by residues cysteine 44, histidine 69, and glutamate 155. 179–184 (GAGPIG) serves as a coordination point for NAD(+).

It belongs to the zinc-containing alcohol dehydrogenase family. It depends on Zn(2+) as a cofactor.

The enzyme catalyses xylitol + NAD(+) = D-xylulose + NADH + H(+). It functions in the pathway carbohydrate degradation; L-arabinose degradation via L-arabinitol; D-xylulose 5-phosphate from L-arabinose (fungal route): step 4/5. This is D-xylulose reductase (XYL2) from Saccharomyces cerevisiae (strain ATCC 204508 / S288c) (Baker's yeast).